The sequence spans 281 residues: Undecaprenyl-diphosphatase (281 aa).

The next 7 helical transmembrane spans lie at 49-69, 92-112, 116-136, 152-172, 196-216, 224-244, and 257-277; these read SANT…AWIF, LHIF…DDFI, LFSV…MIAA, MTYK…WPGF, TFIM…ASNI, ILFY…SIRL, and FAIY…GFGI.

The protein belongs to the UppP family.

It localises to the cell membrane. The catalysed reaction is di-trans,octa-cis-undecaprenyl diphosphate + H2O = di-trans,octa-cis-undecaprenyl phosphate + phosphate + H(+). Functionally, catalyzes the dephosphorylation of undecaprenyl diphosphate (UPP). Confers resistance to bacitracin. In Macrococcus caseolyticus (strain JCSC5402) (Macrococcoides caseolyticum), this protein is Undecaprenyl-diphosphatase.